The primary structure comprises 637 residues: Sec1 family domain-containing protein 1 (637 aa).

Phosphoserine occurs at positions 32, 298, and 523.

This sequence belongs to the STXBP/unc-18/SEC1 family. Interacts with STX17. Interacts with the COG complex via COG4. Interacts with STX5A. In terms of tissue distribution, highly expressed in testis. Detected at lower levels in brain, astrocytes, heart and small intestine.

It is found in the cytoplasm. Its subcellular location is the endoplasmic reticulum membrane. The protein resides in the golgi apparatus. The protein localises to the golgi stack membrane. Its function is as follows. Plays a role in SNARE-pin assembly and Golgi-to-ER retrograde transport via its interaction with COG4. Involved in vesicular transport between the endoplasmic reticulum and the Golgi. In Rattus norvegicus (Rat), this protein is Sec1 family domain-containing protein 1 (Scfd1).